A 509-amino-acid polypeptide reads, in one-letter code: MRKPTALIILDGFGLREETYGNAVAQAKKPNFDGYWNKFPHTTLTACGEAVGLPEGQMGNSEVGHLNIGAGRIVYQSLTRVNVAIREGEFDKNETFQSAIKSVKEKGTALHLFGLLSDGGVHSHMNHMFALLRLAAKEGVEKVYIHAFLDGRDVGPKTAQSYIDATNEVIKETGVGQFATISGRYYSMDRDKRWDRVEKCYRAMVNGEGPTYKSAEECVEDSYANGIYDEFVLPSVIVNEDNTPVATINDDDAVIFYNFRPDRAIQIARVFTNGDFREFDRGEKVPHIPEFVCMTHFSETVDGYVAFKPMNLDNTLGEVVAQAGLKQLRIAETEKYPHVTFFFSGGREAEFPGEERILINSPKVATYDLKPEMSIYEVTDALVNEIENDKHDVIILNFANCDMVGHSGMMEPTIKAVEATDECLGKVVEAILAKDGVALITADHGNADEELTSEGEPMTAHTTNPVPFIVTKNDVELREDGILGDIAPTMLTLLGVEQPKEMTGKTIIK.

Aspartate 11 lines the Mn(2+) pocket. Position 35 is a phosphotyrosine (tyrosine 35). Residue serine 61 participates in Mn(2+) binding. Residue serine 61 is the Phosphoserine intermediate of the active site. Residues histidine 122, 152 to 153 (RD), arginine 184, arginine 190, 260 to 263 (RPDR), and lysine 335 contribute to the substrate site. Positions 402, 406, 443, 444, and 461 each coordinate Mn(2+).

It belongs to the BPG-independent phosphoglycerate mutase family. Monomer. The cofactor is Mn(2+).

The enzyme catalyses (2R)-2-phosphoglycerate = (2R)-3-phosphoglycerate. The protein operates within carbohydrate degradation; glycolysis; pyruvate from D-glyceraldehyde 3-phosphate: step 3/5. Functionally, essential for rapid growth and for sporulation. Catalyzes the interconversion of 2-phosphoglycerate and 3-phosphoglycerate. This is 2,3-bisphosphoglycerate-independent phosphoglycerate mutase from Bacillus anthracis.